The chain runs to 719 residues: Potassium channel KOR2 (719 aa).

The Cytoplasmic portion of the chain corresponds to 1–63 (MAEEYELNEI…VIHPNGRWYR (63 aa)). The chain crosses the membrane as a helical span at residues 64 to 84 (IWANMMFLWSIYSTFFTPFEF). At 85-93 (SFFRGLPDQ) the chain is on the extracellular side. The chain crosses the membrane as a helical span at residues 94-114 (LLDLECVQLVFLADVAVHFFL). Residues 115-137 (AYRDPHTYRMVHDKRHIALRYIK) lie on the Cytoplasmic side of the membrane. A helical transmembrane segment spans residues 138–158 (GSFALDVLGCFPWDAIYKVTG). The Extracellular segment spans residues 159–164 (RVEAVR). Residues 165–185 (WLVWVRLYRGRKVMAFFKRVE) form a helical; Voltage-sensor membrane-spanning segment. Residues 186-199 (KDIRVSYLLTRIVK) are Cytoplasmic-facing. Residues 200 to 220 (LITVELYCTHTAACGFYYLAT) form a helical membrane-spanning segment. The Extracellular portion of the chain corresponds to 221 to 255 (TLPPAREGGTWIGSLSLGDARYINFREVDLLTRYV). Residues 256 to 275 (TSLYLAIVTMATVGYGDIHA) constitute an intramembrane region (pore-forming). At 276 to 285 (VNTREMAFTV) the chain is on the extracellular side. A helical transmembrane segment spans residues 286-306 (VYISFSIVLSAYLIGNMTALI). Residues 307 to 719 (VKGSRTERFR…LEQARTVATN (413 aa)) are Cytoplasmic-facing. Residue 383–503 (LFRGCSDDFL…SQILSNLLKG (121 aa)) participates in a nucleoside 3',5'-cyclic phosphate binding. 5 ANK repeats span residues 523-556 (KQESELVLGVNNAAYHGDIFRLKSLISAGADPSK), 560-589 (DGRTALHIAALRGYENIVRFLIQRGANVNS), 593-622 (FGNSPLLQAVKSGHDRITSLLVEHGAILNL), 624-653 (DAGGYLCRVVRGGRIDLLKKLLRFGISPNC), and 657-686 (DQRTPLHIAAAEGLHLVASTLIESGADIQA).

This sequence belongs to the potassium channel family. Plant (TC 1.A.1.4) subfamily.

It localises to the membrane. Probable outward-rectifying potassium channel. This is Potassium channel KOR2 from Oryza sativa subsp. japonica (Rice).